Consider the following 247-residue polypeptide: Granzyme B (247 aa).

An N-terminal signal peptide occupies residues 1-18 (MQPILLLLAFLLLPRADA). Positions 19-20 (GE) are cleaved as a propeptide — activation peptide. One can recognise a Peptidase S1 domain in the interval 21–245 (IIGGHEAKPH…FVHWIKKTMK (225 aa)). Cysteine 49 and cysteine 65 are oxidised to a cystine. Histidine 64 serves as the catalytic Charge relay system. N-linked (GlcNAc...) asparagine glycosylation is found at asparagine 71 and asparagine 104. Aspartate 108 acts as the Charge relay system in catalysis. Disulfide bonds link cysteine 142–cysteine 209 and cysteine 173–cysteine 188. The Charge relay system role is filled by serine 203.

This sequence belongs to the peptidase S1 family. Granzyme subfamily.

It is found in the secreted. The protein localises to the cytolytic granule. It carries out the reaction Preferential cleavage: -Asp-|-Xaa- &gt;&gt; -Asn-|-Xaa- &gt; -Met-|-Xaa-, -Ser-|-Xaa-.. With respect to regulation, inactivated by the serine protease inhibitor diisopropylfluorophosphate. Functionally, abundant protease in the cytosolic granules of cytotoxic T-cells and NK-cells which activates caspase-independent pyroptosis when delivered into the target cell through the immunological synapse. It cleaves after Asp. Once delivered into the target cell, acts by catalyzing cleavage of gasdermin-E (GSDME), releasing the pore-forming moiety of GSDME, thereby triggering pyroptosis and target cell death. Seems to be linked to an activation cascade of caspases (aspartate-specific cysteine proteases) responsible for apoptosis execution. Cleaves caspase-3, -9 and -10 (CASP3, CASP9 and CASP10, respectively) to give rise to active enzymes mediating apoptosis. Cleaves and activates CASP7 in response to bacterial infection, promoting plasma membrane repair. The sequence is that of Granzyme B from Homo sapiens (Human).